The primary structure comprises 718 residues: Phenylalanine--tRNA ligase beta subunit (718 aa).

In terms of domain architecture, tRNA-binding spans 39–153; it reads LNEISGIKFG…IFDLESNPLK (115 aa). The region spanning 386–460 is the B5 domain; sequence SKKTFLDLNY…RFYGLEKLKD (75 aa). Mg(2+)-binding residues include Asp438, Asp444, and Asp448.

Belongs to the phenylalanyl-tRNA synthetase beta subunit family. Type 1 subfamily. As to quaternary structure, tetramer of two alpha and two beta subunits. The cofactor is Mg(2+).

Its subcellular location is the cytoplasm. The enzyme catalyses tRNA(Phe) + L-phenylalanine + ATP = L-phenylalanyl-tRNA(Phe) + AMP + diphosphate + H(+). This chain is Phenylalanine--tRNA ligase beta subunit, found in Mesomycoplasma hyopneumoniae (strain J / ATCC 25934 / NCTC 10110) (Mycoplasma hyopneumoniae).